Consider the following 298-residue polypeptide: Tyrosine recombinase XerC (298 aa).

In terms of domain architecture, Core-binding (CB) spans 2–88; it reads TDLHTDVERY…ALRSFFDWLV (87 aa). The Tyr recombinase domain occupies 109–288; the sequence is HLPKNIDVDD…DFQHLASVYD (180 aa). Catalysis depends on residues arginine 148, lysine 172, histidine 240, arginine 243, and histidine 266. Tyrosine 275 (O-(3'-phospho-DNA)-tyrosine intermediate) is an active-site residue.

This sequence belongs to the 'phage' integrase family. XerC subfamily. In terms of assembly, forms a cyclic heterotetrameric complex composed of two molecules of XerC and two molecules of XerD, in which XerC interacts with XerD via its C-terminal region, XerD interacts with XerC via its C-terminal region and so on.

Its subcellular location is the cytoplasm. FtsK may regulate the catalytic switch between XerC and XerD in the heterotetrameric complex during the two steps of the recombination process. Site-specific tyrosine recombinase, which acts by catalyzing the cutting and rejoining of the recombining DNA molecules. Binds cooperatively to specific DNA consensus sequences that are separated from XerD binding sites by a short central region, forming the heterotetrameric XerC-XerD complex that recombines DNA substrates. The complex is essential to convert dimers of the bacterial chromosome into monomers to permit their segregation at cell division. It also contributes to the segregational stability of plasmids. In the complex XerC specifically exchanges the top DNA strands. This chain is Tyrosine recombinase XerC, found in Shigella flexneri serotype 5b (strain 8401).